We begin with the raw amino-acid sequence, 264 residues long: Ion-translocating oxidoreductase complex subunit B (264 aa).

A helical membrane pass occupies residues 5–25; sequence LINSIAVLAGLGFAVGVMLVI. The region spanning 33–92 is the 4Fe-4S domain; it reads DSNPLIDDVASLLPGANCGGCGFAGCAACAEAIVEQGAPVNSCPVGGFEVAKQIGALLGQ. The [4Fe-4S] cluster site is built by Cys-50, Cys-53, Cys-58, Cys-75, Cys-138, Cys-142, Cys-148, Cys-152, Cys-172, Cys-175, Cys-178, Cys-182, Cys-217, Cys-220, Cys-223, Cys-227, Cys-246, Cys-249, Cys-252, and Cys-256. 4Fe-4S ferredoxin-type domains are found at residues 127–162, 163–192, 207–236, and 237–264; these read VALMLCDSRKGCTYGCLGLGTCVQACQFGALSMGED, GFPVVNKALCTSCGNCIAACPNGVLTFARD, KDVKAVCEVGCIGCKKCEKECPAGAIRVTE, and FLAEIDQEKCTACGACVAICPQKAIELR.

It belongs to the 4Fe4S bacterial-type ferredoxin family. RnfB subfamily. In terms of assembly, the Rnf complex is probably composed of eight subunits, including RnfA, RnfB, RnfC, RnfD, RnfE and RnfG. [4Fe-4S] cluster is required as a cofactor.

The protein resides in the cell membrane. Its function is as follows. Part of a membrane-bound complex that couples electron transfer with translocation of ions across the membrane. Catalyzes Na(+) transport, most probably coupled to electron transfer from reduced ferredoxin to methanophenazine and heterodisulfide reductase. Involved in heterodisulfide reduction during methanogenesis from acetate. The chain is Ion-translocating oxidoreductase complex subunit B from Methanosarcina acetivorans (strain ATCC 35395 / DSM 2834 / JCM 12185 / C2A).